Consider the following 444-residue polypeptide: Putative permease IIC component YwbA (444 aa).

The PTS EIIC type-3 domain occupies 8–421 (MEEKIMPVAG…LITCAIYYPF (414 aa)). Helical transmembrane passes span 31-51 (GIIL…LTSL), 72-92 (LGYP…FGIA), 104-124 (LSAG…EVPF), 138-158 (GIPI…IALF), 187-207 (FVAL…RLLI), 223-243 (LGTP…AEFV), 246-266 (LLWS…APIW), 291-311 (FFQI…VLTM), 349-371 (PLLI…IGMS), and 402-422 (SGAV…YPFF).

Its subcellular location is the cell membrane. Its function is as follows. The phosphoenolpyruvate-dependent sugar phosphotransferase system (PTS), a major carbohydrate active -transport system, catalyzes the phosphorylation of incoming sugar substrates concomitant with their translocation across the cell membrane. This chain is Putative permease IIC component YwbA (ywbA), found in Bacillus subtilis (strain 168).